Here is a 252-residue protein sequence, read N- to C-terminus: Imidazole glycerol phosphate synthase subunit HisF (252 aa).

Residues D11 and D130 contribute to the active site.

This sequence belongs to the HisA/HisF family. As to quaternary structure, heterodimer of HisH and HisF.

The protein localises to the cytoplasm. It catalyses the reaction 5-[(5-phospho-1-deoxy-D-ribulos-1-ylimino)methylamino]-1-(5-phospho-beta-D-ribosyl)imidazole-4-carboxamide + L-glutamine = D-erythro-1-(imidazol-4-yl)glycerol 3-phosphate + 5-amino-1-(5-phospho-beta-D-ribosyl)imidazole-4-carboxamide + L-glutamate + H(+). The protein operates within amino-acid biosynthesis; L-histidine biosynthesis; L-histidine from 5-phospho-alpha-D-ribose 1-diphosphate: step 5/9. Its function is as follows. IGPS catalyzes the conversion of PRFAR and glutamine to IGP, AICAR and glutamate. The HisF subunit catalyzes the cyclization activity that produces IGP and AICAR from PRFAR using the ammonia provided by the HisH subunit. The polypeptide is Imidazole glycerol phosphate synthase subunit HisF (Paramagnetospirillum magneticum (strain ATCC 700264 / AMB-1) (Magnetospirillum magneticum)).